Reading from the N-terminus, the 299-residue chain is Apolipoprotein E (299 aa).

Residues 1–18 (MKVLCTVLVVTLLAGCRA) form the signal peptide. 7 consecutive repeat copies span residues 74 to 95 (VLMEDTMKAVKAYKSELEQELV), 96 to 117 (PMAEDTKARLSKELQAAQARLG), 118 to 139 (ADMEEVRNRLAQYRNEMQAMLG), 140 to 161 (QSADELRARLASHLRKLRKRML), 162 to 183 (RDAEDLQKRLAVYKDGASEGAE), 184 to 205 (RGVSAIRERLGSLVEQSRVRAA), and 224 to 245 (GRLEEVRGQAQDRLEEMREQME). The interval 74–245 (VLMEDTMKAV…RLEEMREQME (172 aa)) is 8 X 22 AA approximate tandem repeats. At Met137 the chain carries Methionine sulfoxide. Residue Ser141 is modified to Phosphoserine. The LDL and other lipoprotein receptors binding stretch occupies residues 152–162 (HLRKLRKRMLR). 156–159 (LRKR) is a heparin binding site. Residues 204–273 (AALTGQPLQE…GWFEPMVEDM (70 aa)) form a lipid-binding and lipoprotein association region. 219–226 (GKQLRGRL) contributes to the heparin binding site. A specificity for association with VLDL region spans residues 261 to 273 (RLKGWFEPMVEDM).

Belongs to the apolipoprotein A1/A4/E family. As to quaternary structure, homotetramer. May interact with ABCA1; functionally associated with ABCA1 in the biogenesis of HDLs. May interact with APP/A4 amyloid-beta peptide; the interaction is extremely stable in vitro but its physiological significance is unclear. May interact with MAPT. May interact with MAP2. In the cerebrospinal fluid, interacts with secreted SORL1. Interacts with PMEL; this allows the loading of PMEL luminal fragment on ILVs to induce fibril nucleation. APOE exists as multiple glycosylated and sialylated glycoforms within cells and in plasma. The extent of glycosylation and sialylation are tissue and context specific. Post-translationally, glycated in plasma VLDL. In terms of processing, phosphorylated by FAM20C in the extracellular medium.

Its subcellular location is the secreted. The protein resides in the extracellular space. It localises to the extracellular matrix. The protein localises to the extracellular vesicle. It is found in the endosome. Its subcellular location is the multivesicular body. Its function is as follows. APOE is an apolipoprotein, a protein associating with lipid particles, that mainly functions in lipoprotein-mediated lipid transport between organs via the plasma and interstitial fluids. APOE is a core component of plasma lipoproteins and is involved in their production, conversion and clearance. Apolipoproteins are amphipathic molecules that interact both with lipids of the lipoprotein particle core and the aqueous environment of the plasma. As such, APOE associates with chylomicrons, chylomicron remnants, very low density lipoproteins (VLDL) and intermediate density lipoproteins (IDL) but shows a preferential binding to high-density lipoproteins (HDL). It also binds a wide range of cellular receptors including the LDL receptor/LDLR, the LDL receptor-related proteins LRP1, LRP2 and LRP8 and the very low-density lipoprotein receptor/VLDLR that mediate the cellular uptake of the APOE-containing lipoprotein particles. Finally, APOE also has a heparin-binding activity and binds heparan-sulfate proteoglycans on the surface of cells, a property that supports the capture and the receptor-mediated uptake of APOE-containing lipoproteins by cells. A main function of APOE is to mediate lipoprotein clearance through the uptake of chylomicrons, VLDLs, and HDLs by hepatocytes. APOE is also involved in the biosynthesis by the liver of VLDLs as well as their uptake by peripheral tissues ensuring the delivery of triglycerides and energy storage in muscle, heart and adipose tissues. By participating in the lipoprotein-mediated distribution of lipids among tissues, APOE plays a critical role in plasma and tissues lipid homeostasis. APOE is also involved in two steps of reverse cholesterol transport, the HDLs-mediated transport of cholesterol from peripheral tissues to the liver, and thereby plays an important role in cholesterol homeostasis. First, it is functionally associated with ABCA1 in the biogenesis of HDLs in tissues. Second, it is enriched in circulating HDLs and mediates their uptake by hepatocytes. APOE also plays an important role in lipid transport in the central nervous system, regulating neuron survival and sprouting. The protein is Apolipoprotein E (APOE) of Octodon degus (Degu).